The following is a 239-amino-acid chain: Ribonuclease PH (239 aa).

Phosphate contacts are provided by residues arginine 87 and 125–127 (GTR).

This sequence belongs to the RNase PH family. Homohexameric ring arranged as a trimer of dimers.

It carries out the reaction tRNA(n+1) + phosphate = tRNA(n) + a ribonucleoside 5'-diphosphate. Functionally, phosphorolytic 3'-5' exoribonuclease that plays an important role in tRNA 3'-end maturation. Removes nucleotide residues following the 3'-CCA terminus of tRNAs; can also add nucleotides to the ends of RNA molecules by using nucleoside diphosphates as substrates, but this may not be physiologically important. Probably plays a role in initiation of 16S rRNA degradation (leading to ribosome degradation) during starvation. This is Ribonuclease PH from Acaryochloris marina (strain MBIC 11017).